The primary structure comprises 52 residues: Insulin (52 aa).

Intrachain disulfides connect Cys7/Cys38, Cys19/Cys51, and Cys37/Cys42.

Belongs to the insulin family. Heterodimer of a B chain and an A chain linked by two disulfide bonds.

It is found in the secreted. Functionally, insulin decreases blood glucose concentration. It increases cell permeability to monosaccharides, amino acids and fatty acids. It accelerates glycolysis, the pentose phosphate cycle, and glycogen synthesis in liver. The chain is Insulin (ins) from Amia calva (Bowfin).